Consider the following 302-residue polypeptide: Vacuolar protein sorting-associated protein 26A (302 aa).

The protein belongs to the VPS26 family. As to quaternary structure, component of the retromer complex which consists of VPS29 (MAG1), VPS26 (VPS26A or VPS26B), VPS35 (VPS35A or VPS35B or VPS35C), VPS5/17 (SNX1 or SNX2A or SNX2B). Component of a retromer subcomplex consisting of VPS29 (MAG1), VPS26 (VPS26A or VPS26B), VPS35 (VPS35A or VPS35B or VPS35C).

Its subcellular location is the cytoplasm. The protein resides in the endosome membrane. It is found in the prevacuolar compartment membrane. It localises to the golgi apparatus. The protein localises to the trans-Golgi network membrane. In terms of biological role, plays a role in vesicular protein sorting. Component of the membrane-associated retromer complex which is essential in endosome-to-Golgi retrograde transport. The VPS29-VPS26-VPS35 subcomplex may be involved in recycling of specific cargos from endosome to the plasma membrane. The chain is Vacuolar protein sorting-associated protein 26A (VPS26A) from Arabidopsis thaliana (Mouse-ear cress).